The chain runs to 117 residues: Large ribosomal subunit protein bL20 (117 aa).

This sequence belongs to the bacterial ribosomal protein bL20 family.

Functionally, binds directly to 23S ribosomal RNA and is necessary for the in vitro assembly process of the 50S ribosomal subunit. It is not involved in the protein synthesizing functions of that subunit. The polypeptide is Large ribosomal subunit protein bL20 (Geobacter sulfurreducens (strain ATCC 51573 / DSM 12127 / PCA)).